Reading from the N-terminus, the 564-residue chain is Septation ring formation regulator EzrA (564 aa).

At 1-4 (MVLF) the chain is on the extracellular side. A helical membrane pass occupies residues 5-23 (IILAILVVILIAIGVLFYM). The Cytoplasmic segment spans residues 24–564 (RSNKRNLIEK…KHIEEQVIKE (541 aa)). Coiled-coil stretches lie at residues 84–126 (VEEK…HQVT), 165–223 (EAAE…LIRE), 271–303 (MISRLELDEANNKLENINDKLDEMYDLIEYEVK), and 350–435 (VRQF…RRLL).

The protein belongs to the EzrA family.

It is found in the cell membrane. Functionally, negative regulator of FtsZ ring formation; modulates the frequency and position of FtsZ ring formation. Inhibits FtsZ ring formation at polar sites. Interacts either with FtsZ or with one of its binding partners to promote depolymerization. The chain is Septation ring formation regulator EzrA from Staphylococcus epidermidis (strain ATCC 35984 / DSM 28319 / BCRC 17069 / CCUG 31568 / BM 3577 / RP62A).